The sequence spans 348 residues: Lipoyl synthase (348 aa).

Residues 1–45 (MSESAKPRITSGSKFRNEHGFSAIKDGVKRSSSNTEGKSLERKPK) are disordered. [4Fe-4S] cluster-binding residues include Cys73, Cys78, Cys84, Cys99, Cys103, Cys106, and Ser314. Residues 85 to 303 (WTNGTATIMV…RDIGLEKGFM (219 aa)) form the Radical SAM core domain.

Belongs to the radical SAM superfamily. Lipoyl synthase family. [4Fe-4S] cluster is required as a cofactor.

It localises to the cytoplasm. It carries out the reaction [[Fe-S] cluster scaffold protein carrying a second [4Fe-4S](2+) cluster] + N(6)-octanoyl-L-lysyl-[protein] + 2 oxidized [2Fe-2S]-[ferredoxin] + 2 S-adenosyl-L-methionine + 4 H(+) = [[Fe-S] cluster scaffold protein] + N(6)-[(R)-dihydrolipoyl]-L-lysyl-[protein] + 4 Fe(3+) + 2 hydrogen sulfide + 2 5'-deoxyadenosine + 2 L-methionine + 2 reduced [2Fe-2S]-[ferredoxin]. Its pathway is protein modification; protein lipoylation via endogenous pathway; protein N(6)-(lipoyl)lysine from octanoyl-[acyl-carrier-protein]: step 2/2. Functionally, catalyzes the radical-mediated insertion of two sulfur atoms into the C-6 and C-8 positions of the octanoyl moiety bound to the lipoyl domains of lipoate-dependent enzymes, thereby converting the octanoylated domains into lipoylated derivatives. This is Lipoyl synthase from Marinobacter nauticus (strain ATCC 700491 / DSM 11845 / VT8) (Marinobacter aquaeolei).